The chain runs to 62 residues: UPF0434 protein RHE_CH03977 (62 aa).

The protein belongs to the UPF0434 family.

The sequence is that of UPF0434 protein RHE_CH03977 from Rhizobium etli (strain ATCC 51251 / DSM 11541 / JCM 21823 / NBRC 15573 / CFN 42).